The chain runs to 302 residues: Heme A synthase (302 aa).

Residues 1 to 8 (MFRKQNLK) lie on the Cytoplasmic side of the membrane. The chain crosses the membrane as a helical span at residues 9–29 (WLGVLATIIMTFVQLGGALVT). Over 30–67 (KTGSEDGCGSSWPLCNGALLPENLPIQTIIELSHRAVS) the chain is Extracellular. C37 and C44 are joined by a disulfide. E60 is a catalytic residue. H63 contributes to the heme o binding site. The helical transmembrane segment at 68 to 88 (AISLIVVLWLVITAWKNIGYI) threads the bilayer. Over 89-93 (KEIKP) the chain is Cytoplasmic. A helical transmembrane segment spans residues 94 to 114 (LSIISVGFLLVQALVGAAAVI). Over 115-125 (WQQNPYVLALH) the chain is Extracellular. Heme o is bound at residue H125. Residues 126–146 (FGISLISFSSVFLMTLIIFSI) form a helical membrane-spanning segment. Over 147–161 (DKKYEADILFIHKPL) the chain is Cytoplasmic. The helical transmembrane segment at 162–182 (RILTWLMAIIVYLTIYTGALV) threads the bilayer. At 183 to 215 (RHTKSSLAYGAWPIPFDDIVPHNAHDWVQFSHR) the chain is on the extracellular side. H214 lines the heme b pocket. The chain crosses the membrane as a helical span at residues 216–236 (GMALITFIWIMITFIHAIKNY). The Cytoplasmic segment spans residues 237 to 244 (SDNRTVRY). Residues 245–265 (GYTASFILVILQVITGALSVI) form a helical membrane-spanning segment. The Extracellular segment spans residues 266–270 (TNVNL). Residues 271–291 (IIALFHALFITYLFGMIAYFI) traverse the membrane as a helical segment. A heme b-binding site is contributed by H276. Over 292–302 (LLMLRTTRSQK) the chain is Cytoplasmic.

Belongs to the COX15/CtaA family. Type 1 subfamily. Interacts with CtaB. The cofactor is heme b.

It is found in the cell membrane. The catalysed reaction is Fe(II)-heme o + 2 A + H2O = Fe(II)-heme a + 2 AH2. It functions in the pathway porphyrin-containing compound metabolism; heme A biosynthesis; heme A from heme O: step 1/1. In terms of biological role, catalyzes the conversion of heme O to heme A by two successive hydroxylations of the methyl group at C8. The first hydroxylation forms heme I, the second hydroxylation results in an unstable dihydroxymethyl group, which spontaneously dehydrates, resulting in the formyl group of heme A. In Staphylococcus epidermidis (strain ATCC 35984 / DSM 28319 / BCRC 17069 / CCUG 31568 / BM 3577 / RP62A), this protein is Heme A synthase.